The following is a 72-amino-acid chain: Protein kish-A (72 aa).

Positions 1-26 (MSAIFNFQSLLTVILLLICTCAYIRS) are cleaved as a signal peptide. The Extracellular segment spans residues 27 to 53 (LAPSLLDKNKTGLLGIFWKCARIGERK). A glycan (N-linked (GlcNAc...) asparagine) is linked at Asn35. A helical transmembrane segment spans residues 54-71 (SPYVAVCCVVMAFSILFV). Gln72 is a topological domain (cytoplasmic).

This sequence belongs to the KISH family.

It is found in the golgi apparatus membrane. In terms of biological role, involved in the early part of the secretory pathway. The polypeptide is Protein kish-A (TMEM167A) (Gallus gallus (Chicken)).